We begin with the raw amino-acid sequence, 152 residues long: Ribosomal RNA large subunit methyltransferase H (152 aa).

Residues Leu-68, Gly-100, and 119-124 (FGRMTW) each bind S-adenosyl-L-methionine.

Belongs to the RNA methyltransferase RlmH family. In terms of assembly, homodimer.

The protein localises to the cytoplasm. The catalysed reaction is pseudouridine(1915) in 23S rRNA + S-adenosyl-L-methionine = N(3)-methylpseudouridine(1915) in 23S rRNA + S-adenosyl-L-homocysteine + H(+). Functionally, specifically methylates the pseudouridine at position 1915 (m3Psi1915) in 23S rRNA. In Paramagnetospirillum magneticum (strain ATCC 700264 / AMB-1) (Magnetospirillum magneticum), this protein is Ribosomal RNA large subunit methyltransferase H.